The primary structure comprises 343 residues: Branched-chain-amino-acid aminotransferase (343 aa).

An N6-(pyridoxal phosphate)lysine modification is found at lysine 182.

The protein belongs to the class-IV pyridoxal-phosphate-dependent aminotransferase family. Pyridoxal 5'-phosphate serves as cofactor.

The catalysed reaction is L-leucine + 2-oxoglutarate = 4-methyl-2-oxopentanoate + L-glutamate. It carries out the reaction L-isoleucine + 2-oxoglutarate = (S)-3-methyl-2-oxopentanoate + L-glutamate. The enzyme catalyses L-valine + 2-oxoglutarate = 3-methyl-2-oxobutanoate + L-glutamate. It functions in the pathway amino-acid biosynthesis; L-isoleucine biosynthesis; L-isoleucine from 2-oxobutanoate: step 4/4. It participates in amino-acid biosynthesis; L-leucine biosynthesis; L-leucine from 3-methyl-2-oxobutanoate: step 4/4. The protein operates within amino-acid biosynthesis; L-valine biosynthesis; L-valine from pyruvate: step 4/4. Its function is as follows. Acts on leucine, isoleucine and valine. This is Branched-chain-amino-acid aminotransferase (ilvE) from Haemophilus influenzae (strain ATCC 51907 / DSM 11121 / KW20 / Rd).